The primary structure comprises 349 residues: 4-hydroxythreonine-4-phosphate dehydrogenase (349 aa).

Threonine 135 serves as a coordination point for substrate. A divalent metal cation-binding residues include histidine 170, histidine 215, and histidine 276. Substrate-binding residues include lysine 284, asparagine 293, and arginine 302.

This sequence belongs to the PdxA family. As to quaternary structure, homodimer. A divalent metal cation is required as a cofactor.

It is found in the cytoplasm. It carries out the reaction 4-(phosphooxy)-L-threonine + NAD(+) = 3-amino-2-oxopropyl phosphate + CO2 + NADH. The protein operates within cofactor biosynthesis; pyridoxine 5'-phosphate biosynthesis; pyridoxine 5'-phosphate from D-erythrose 4-phosphate: step 4/5. Functionally, catalyzes the NAD(P)-dependent oxidation of 4-(phosphooxy)-L-threonine (HTP) into 2-amino-3-oxo-4-(phosphooxy)butyric acid which spontaneously decarboxylates to form 3-amino-2-oxopropyl phosphate (AHAP). This Synechococcus sp. (strain JA-3-3Ab) (Cyanobacteria bacterium Yellowstone A-Prime) protein is 4-hydroxythreonine-4-phosphate dehydrogenase.